A 316-amino-acid chain; its full sequence is 4-diphosphocytidyl-2-C-methyl-D-erythritol kinase (316 aa).

The active site involves Lys-32. Residue 126–136 coordinates ATP; sequence PVGAGLGGGSA. The active site involves Asp-168.

This sequence belongs to the GHMP kinase family. IspE subfamily.

The catalysed reaction is 4-CDP-2-C-methyl-D-erythritol + ATP = 4-CDP-2-C-methyl-D-erythritol 2-phosphate + ADP + H(+). It functions in the pathway isoprenoid biosynthesis; isopentenyl diphosphate biosynthesis via DXP pathway; isopentenyl diphosphate from 1-deoxy-D-xylulose 5-phosphate: step 3/6. In terms of biological role, catalyzes the phosphorylation of the position 2 hydroxy group of 4-diphosphocytidyl-2C-methyl-D-erythritol. The protein is 4-diphosphocytidyl-2-C-methyl-D-erythritol kinase of Bifidobacterium longum subsp. infantis (strain ATCC 15697 / DSM 20088 / JCM 1222 / NCTC 11817 / S12).